We begin with the raw amino-acid sequence, 863 residues long: Adenosylcobalamin biosynthesis bifunctional protein CobDQ (863 aa).

Positions 1-373 are putative threonine-phosphate decarboxylase; the sequence is MNLPEHGGNL…LKSRKKTPSI (373 aa). O-phospho-L-threonine is bound by residues 6–7, N30, and N159; that span reads HG. N6-(pyridoxal phosphate)lysine is present on K214. O-phospho-L-threonine is bound by residues R323 and R337. A cobyric acid synthase region spans residues 374–863; the sequence is MFQGTASNVG…NLIYRKLGLG (490 aa). The region spanning 622–810 is the GATase cobBQ-type domain; it reads RLDVVLIDIP…IHGIFDKDEF (189 aa). C704 acts as the Nucleophile in catalysis. H802 is a catalytic residue.

It in the N-terminal section; belongs to the class-II pyridoxal-phosphate-dependent aminotransferase family. In the C-terminal section; belongs to the CobB/CobQ family. CobQ subfamily. It depends on pyridoxal 5'-phosphate as a cofactor.

The enzyme catalyses O-phospho-L-threonine + H(+) = (R)-1-aminopropan-2-yl phosphate + CO2. It functions in the pathway cofactor biosynthesis; adenosylcobalamin biosynthesis. Catalyzes two activities which are involved in the adenosylcobalamin biosynthesis: decarboxylates L-threonine-O-3-phosphate to yield (R)-1-amino-2-propanol O-2-phosphate, the precursor for the linkage between the nucleotide loop and the corrin ring in cobalamin, and catalyzes amidations at positions B, D, E, and G on adenosylcobyrinic A,C-diamide. NH(2) groups are provided by glutamine, and one molecule of ATP is hydrogenolyzed for each amidation. The protein is Adenosylcobalamin biosynthesis bifunctional protein CobDQ (cobDQ) of Leptospira interrogans serogroup Icterohaemorrhagiae serovar Lai (strain 56601).